A 193-amino-acid polypeptide reads, in one-letter code: Transcriptional regulator RamR (193 aa).

Residues 7-66 enclose the HTH tetR-type domain; sequence EDKKQALLEAATQAIAQSGIAASTAVIARNAGVAEGTLFRYFATKDELINTLYLHLKQDL. A DNA-binding region (H-T-H motif) is located at residues 29–48; sequence STAVIARNAGVAEGTLFRYF.

Homodimer. May bind DNA either as a homodimer or as a pair of homodimers. Various chemicals reduce DNA-binding in vitro, including bile acids, such as cholic and chenodeoxycholic acids, and antimicrobial drugs, such as berberine, crystal violet, dequalinium, ethidium bromide and rhodamine 6G. Binds small regulatory RNA StyR3.

Transcriptional regulator. Represses the transcription of the transcriptional activator RamA and, thereby, leads to repression of the expression of the efflux pump subunits AcrA and AcrB, and TolC. Acts by binding directly to the promoter region of the ramA gene. Promoter binding may be inhibited partially by the small regulatory RNA StyR3, perhaps thereby ensuring a basal level of expression of RamA. The sequence is that of Transcriptional regulator RamR from Salmonella typhimurium (strain LT2 / SGSC1412 / ATCC 700720).